We begin with the raw amino-acid sequence, 379 residues long: Methionine aminopeptidase 1 (379 aa).

The C6H2-type zinc-finger motif lies at 7–60; it reads KHICCGIDCNNEADRLQCPKCLNDGVKSYFCGQECFRNSWNIHKHLHRPPNVEK. Positions 10, 15, 24, 27, 37, 41, 49, and 53 each coordinate Zn(2+). H192 serves as a coordination point for a protein. Positions 209, 220, and 289 each coordinate Zn(2+). H296 is a binding site for a protein. E322 and E353 together coordinate Zn(2+). S373 bears the Phosphoserine mark.

Belongs to the peptidase M24A family. Methionine aminopeptidase type 1 subfamily. Associates with the 60S ribosomal subunit of the 80S translational complex. Zn(2+) is required as a cofactor. It depends on Co(2+) as a cofactor. The cofactor is Mn(2+). Requires Fe(2+) as cofactor.

Its subcellular location is the cytoplasm. It is found in the nucleus. The protein localises to the nucleolus. The catalysed reaction is Release of N-terminal amino acids, preferentially methionine, from peptides and arylamides.. Functionally, cotranslationally removes the N-terminal methionine from nascent proteins. The N-terminal methionine is often cleaved when the second residue in the primary sequence is small and uncharged (Met-Ala-, Cys, Gly, Pro, Ser, Thr, or Val). The polypeptide is Methionine aminopeptidase 1 (fma1) (Schizosaccharomyces pombe (strain 972 / ATCC 24843) (Fission yeast)).